Here is a 435-residue protein sequence, read N- to C-terminus: Gamma-glutamyl phosphate reductase (435 aa).

The protein belongs to the gamma-glutamyl phosphate reductase family.

It is found in the cytoplasm. The enzyme catalyses L-glutamate 5-semialdehyde + phosphate + NADP(+) = L-glutamyl 5-phosphate + NADPH + H(+). The protein operates within amino-acid biosynthesis; L-proline biosynthesis; L-glutamate 5-semialdehyde from L-glutamate: step 2/2. Its function is as follows. Catalyzes the NADPH-dependent reduction of L-glutamate 5-phosphate into L-glutamate 5-semialdehyde and phosphate. The product spontaneously undergoes cyclization to form 1-pyrroline-5-carboxylate. The protein is Gamma-glutamyl phosphate reductase of Synechococcus sp. (strain CC9605).